A 624-amino-acid polypeptide reads, in one-letter code: Chaperone protein HtpG (624 aa).

The segment at 1–336 (MKGQETRGFQ…SNDLPLNVSR (336 aa)) is a; substrate-binding. The b stretch occupies residues 337-552 (EILQDSTVTR…ADEMSTQMAK (216 aa)). A c region spans residues 553–624 (LFAAAGQSVP…IRRMNQLLVS (72 aa)).

Belongs to the heat shock protein 90 family. In terms of assembly, homodimer.

The protein resides in the cytoplasm. Functionally, molecular chaperone. Has ATPase activity. This Salmonella typhi protein is Chaperone protein HtpG.